The primary structure comprises 272 residues: Alpha-tubulin N-acetyltransferase (272 aa).

The N-acetyltransferase domain maps to 1–186; it reads MEFRFNCHPL…NNFVVYEGFF (186 aa). Residues 120–133 and 156–165 contribute to the acetyl-CoA site; these read FYVH…GLGR and SEKLLGFLQK. Residues 216-244 form a disordered region; sequence TTVGEQRRSSSQTRQQVVSPPVVQQPPVG. Residues 224–244 are compositionally biased toward low complexity; the sequence is SSSQTRQQVVSPPVVQQPPVG.

The protein belongs to the acetyltransferase ATAT1 family.

The catalysed reaction is L-lysyl-[alpha-tubulin] + acetyl-CoA = N(6)-acetyl-L-lysyl-[alpha-tubulin] + CoA + H(+). Functionally, specifically acetylates 'Lys-40' in alpha-tubulin on the lumenal side of microtubules. Promotes microtubule destabilization and accelerates microtubule dynamics; this activity may be independent of acetylation activity. Acetylates alpha-tubulin with a slow enzymatic rate, due to a catalytic site that is not optimized for acetyl transfer. Enters the microtubule through each end and diffuses quickly throughout the lumen of microtubules. Acetylates only long/old microtubules because of its slow acetylation rate since it does not have time to act on dynamically unstable microtubules before the enzyme is released. In Aedes aegypti (Yellowfever mosquito), this protein is Alpha-tubulin N-acetyltransferase.